The following is a 341-amino-acid chain: Heat-inducible transcription repressor HrcA (341 aa).

This sequence belongs to the HrcA family.

In terms of biological role, negative regulator of class I heat shock genes (grpE-dnaK-dnaJ and groELS operons). Prevents heat-shock induction of these operons. The chain is Heat-inducible transcription repressor HrcA from Mycobacteroides abscessus (strain ATCC 19977 / DSM 44196 / CCUG 20993 / CIP 104536 / JCM 13569 / NCTC 13031 / TMC 1543 / L948) (Mycobacterium abscessus).